A 103-amino-acid polypeptide reads, in one-letter code: Histone H4 (103 aa).

Gly residues predominate over residues 1–14 (MSGRGKGGKGLGKG). Residues 1-20 (MSGRGKGGKGLGKGGAKRHR) form a disordered region. Position 2 is an N-acetylserine (Ser-2). The residue at position 17 (Lys-17) is an N6-acetyllysine. The DNA-binding element occupies 17–21 (KRHRK). Lys-21 is subject to N6-methyllysine.

This sequence belongs to the histone H4 family. As to quaternary structure, the nucleosome is a histone octamer containing two molecules each of H2A, H2B, H3 and H4 assembled in one H3-H4 heterotetramer and two H2A-H2B heterodimers. The octamer wraps approximately 147 bp of DNA.

It localises to the nucleus. The protein resides in the chromosome. In terms of biological role, core component of nucleosome. Nucleosomes wrap and compact DNA into chromatin, limiting DNA accessibility to the cellular machineries which require DNA as a template. Histones thereby play a central role in transcription regulation, DNA repair, DNA replication and chromosomal stability. DNA accessibility is regulated via a complex set of post-translational modifications of histones, also called histone code, and nucleosome remodeling. The chain is Histone H4 from Eucalyptus globulus (Tasmanian blue gum).